The following is a 171-amino-acid chain: MNSIPEGRPTPNLPRTANKRGVARLAAVQALYQMDVAGTGVMEVVAEYEAFRLGKEVDGTQYLDADPQWFRAIVAGVVEDQLKLDPMIHQALTEDWPLSRLDSTLRAILRAGAWELKARKDVPTAVIVSEYVDIAKAFYTEDEPKLVNAVLDRLALVIRGESRGAKPRHKS.

The protein belongs to the NusB family.

Involved in transcription antitermination. Required for transcription of ribosomal RNA (rRNA) genes. Binds specifically to the boxA antiterminator sequence of the ribosomal RNA (rrn) operons. This Brucella ovis (strain ATCC 25840 / 63/290 / NCTC 10512) protein is Transcription antitermination protein NusB.